The following is a 597-amino-acid chain: Protein unc-93 homolog B1 (597 aa).

Residues 1–29 (MEAEPPLYPMAGAAGPQGDEDLLGVPDGP) form a disordered region. 5 helical membrane passes run 64-84 (VLAASAGGMLTYGVYLGLLQM), 110-130 (KMLMGINVTPIAALLYTPVLI), 132-152 (FFGTKWMMFLAVGIYALFVST), 160-180 (TLVPSAVALGMAIVPLWASMG), and 223-243 (IFYSFFHLSFACAQLPMIYFL). Asparagine 251 and asparagine 272 each carry an N-linked (GlcNAc...) asparagine glycan. A run of 5 helical transmembrane segments spans residues 285 to 305 (LIVVESVLMAVAFLAMLLVLG), 343 to 363 (LVPFFIYSGFEVLFACTGIAL), 378 to 398 (LLVAYSLGASAASLLGLLGLW), 403 to 423 (VPLVAGAGVHLLLTFILFFWA), and 428 to 448 (VLQHSWILYVAAALWGVGSAL). The N-linked (GlcNAc...) asparagine glycan is linked to asparagine 449. A run of 2 helical transmembrane segments spans residues 469–489 (FIFTIYHWWQAVAIFTVYLGS) and 491–511 (LHMKAKLAVLLVTLVAAAVSY). Residues 522-597 (VAPRQPRIPR…AQGGDGPEEQ (76 aa)) form a disordered region. Residues serine 547 and serine 550 each carry the phosphoserine modification.

This sequence belongs to the unc-93 family. Interacts with TLR3, TLR5, TLR7, and TLR9 (probably via transmembrane domain). N-glycosylated. Expressed in plasmocytoid dendritic cells (at protein level). Highly expressed in antigen-presenting cells. Expressed in heart, and at lower level in kidney. Expressed at low level in other tissues.

Its subcellular location is the endoplasmic reticulum membrane. It localises to the endosome. The protein resides in the lysosome. It is found in the cytoplasmic vesicle. The protein localises to the phagosome. In terms of biological role, plays an important role in innate and adaptive immunity by regulating nucleotide-sensing Toll-like receptor (TLR) signaling. Required for the transport of a subset of TLRs (including TLR3, TLR7 and TLR9) from the endoplasmic reticulum to endolysosomes where they can engage pathogen nucleotides and activate signaling cascades. May play a role in autoreactive B-cells removal. The sequence is that of Protein unc-93 homolog B1 from Homo sapiens (Human).